We begin with the raw amino-acid sequence, 91 residues long: Small ribosomal subunit protein bS18 (91 aa).

This sequence belongs to the bacterial ribosomal protein bS18 family. In terms of assembly, part of the 30S ribosomal subunit. Forms a tight heterodimer with protein bS6.

Its function is as follows. Binds as a heterodimer with protein bS6 to the central domain of the 16S rRNA, where it helps stabilize the platform of the 30S subunit. The sequence is that of Small ribosomal subunit protein bS18 from Wolbachia sp. subsp. Brugia malayi (strain TRS).